The primary structure comprises 534 residues: Blue-light-activated protein (534 aa).

Positions 20–93 constitute a PAS domain; it reads GKDIFFAAVE…QSIRDAIDQR (74 aa). An S-4a-FMN cysteine modification is found at C70. The 55-residue stretch at 94-148 folds into the PAC domain; that stretch reads VDISTEILNYRKDGSSFWNALFISPVYNDAGELIYFFASQLDISRRRDAEEALRQ. Residues 161-390 enclose the Histidine kinase domain; the sequence is GIAHDFNNLL…TLRLYFPVDE (230 aa). Position 164 is a phosphohistidine; by autocatalysis (H164). A Response regulatory domain is found at 411–527; sequence RILIVEDRPD…DLARKVRQVL (117 aa). A 4-aspartylphosphate modification is found at D461.

FMN binds covalently to cysteine after exposure to blue light and this bond is spontaneously broken in the dark.

It catalyses the reaction ATP + protein L-histidine = ADP + protein N-phospho-L-histidine.. Its function is as follows. Photosensitive kinase and response regulator that is involved in increased bacterial virulence upon exposure to light. The chain is Blue-light-activated protein from Pseudomonas syringae pv. syringae (strain B728a).